Here is a 114-residue protein sequence, read N- to C-terminus: Holo-[acyl-carrier-protein] synthase (114 aa).

Residues aspartate 5 and glutamate 50 each coordinate Mg(2+).

This sequence belongs to the P-Pant transferase superfamily. AcpS family. Mg(2+) serves as cofactor.

It is found in the cytoplasm. The catalysed reaction is apo-[ACP] + CoA = holo-[ACP] + adenosine 3',5'-bisphosphate + H(+). Transfers the 4'-phosphopantetheine moiety from coenzyme A to a Ser of acyl-carrier-protein. This Campylobacter curvus (strain 525.92) protein is Holo-[acyl-carrier-protein] synthase.